An 887-amino-acid polypeptide reads, in one-letter code: Alanine--tRNA ligase (887 aa).

His-564, His-568, Cys-676, and His-680 together coordinate Zn(2+).

Belongs to the class-II aminoacyl-tRNA synthetase family. It depends on Zn(2+) as a cofactor.

The protein resides in the cytoplasm. It catalyses the reaction tRNA(Ala) + L-alanine + ATP = L-alanyl-tRNA(Ala) + AMP + diphosphate. In terms of biological role, catalyzes the attachment of alanine to tRNA(Ala) in a two-step reaction: alanine is first activated by ATP to form Ala-AMP and then transferred to the acceptor end of tRNA(Ala). Also edits incorrectly charged Ser-tRNA(Ala) and Gly-tRNA(Ala) via its editing domain. This is Alanine--tRNA ligase from Sinorhizobium medicae (strain WSM419) (Ensifer medicae).